Reading from the N-terminus, the 462-residue chain is Light-independent protochlorophyllide reductase subunit N (462 aa).

Residues cysteine 24, cysteine 49, and cysteine 109 each contribute to the [4Fe-4S] cluster site.

This sequence belongs to the BchN/ChlN family. In terms of assembly, protochlorophyllide reductase is composed of three subunits; ChlL, ChlN and ChlB. Forms a heterotetramer of two ChlB and two ChlN subunits. Requires [4Fe-4S] cluster as cofactor.

It is found in the plastid. The protein localises to the chloroplast. It catalyses the reaction chlorophyllide a + oxidized 2[4Fe-4S]-[ferredoxin] + 2 ADP + 2 phosphate = protochlorophyllide a + reduced 2[4Fe-4S]-[ferredoxin] + 2 ATP + 2 H2O. The protein operates within porphyrin-containing compound metabolism; chlorophyll biosynthesis (light-independent). Its function is as follows. Component of the dark-operative protochlorophyllide reductase (DPOR) that uses Mg-ATP and reduced ferredoxin to reduce ring D of protochlorophyllide (Pchlide) to form chlorophyllide a (Chlide). This reaction is light-independent. The NB-protein (ChlN-ChlB) is the catalytic component of the complex. The chain is Light-independent protochlorophyllide reductase subunit N from Pleurastrum terricola (Filamentous green alga).